The following is a 277-amino-acid chain: Co-chaperone protein DjlA (277 aa).

The Periplasmic segment spans residues 1–6 (MRYWGK). A helical membrane pass occupies residues 7–31 (LLGLVLGVMYAPGVVGALLGLLVGH). Topologically, residues 32–277 (MVDRALGAKR…DLIKREKGFK (246 aa)) are cytoplasmic. Positions 211 to 277 (DACKVLGVNS…DLIKREKGFK (67 aa)) constitute a J domain.

In terms of assembly, homodimer.

The protein localises to the cell inner membrane. Functionally, regulatory DnaK co-chaperone. Direct interaction between DnaK and DjlA is needed for the induction of the wcaABCDE operon, involved in the synthesis of a colanic acid polysaccharide capsule, possibly through activation of the RcsB/RcsC phosphotransfer signaling pathway. The colanic acid capsule may help the bacterium survive conditions outside the host. The protein is Co-chaperone protein DjlA of Yersinia pestis.